A 468-amino-acid chain; its full sequence is Na(+)/H(+) antiporter NhaA 2 (468 aa).

11 consecutive transmembrane segments (helical) span residues 31-51 (FLHVQAASGIVLLIATAVALA), 82-102 (LHFWINDGLMTIFFFVVGLEI), 118-138 (VLPVAAALGGMLFPALIYLAL), 147-167 (GWGVPMATDIAFAVGALALLG), 176-196 (VLLLALAIIDDIGAILVIAVF), 199-219 (SSISVTGFGLVAVGIAGVLAL), 226-246 (SPVVYAAAGVVIWAGLLSAGV), 321-341 (PWVAYGIMPLFALANAGVSLG), 353-373 (LLLGVVFGLTMGKPLGIMVAC), 393-413 (VLVVGCVAGIGFTMAIFVAGL), and 422-442 (GVAKLAVLLGSLISALVAMAV).

It belongs to the NhaA Na(+)/H(+) (TC 2.A.33) antiporter family.

The protein resides in the cell inner membrane. The enzyme catalyses Na(+)(in) + 2 H(+)(out) = Na(+)(out) + 2 H(+)(in). Its function is as follows. Na(+)/H(+) antiporter that extrudes sodium in exchange for external protons. This is Na(+)/H(+) antiporter NhaA 2 from Sorangium cellulosum (strain So ce56) (Polyangium cellulosum (strain So ce56)).